The chain runs to 366 residues: Transcription factor IIIA (366 aa).

9 consecutive C2H2-type zinc fingers follow at residues 35 to 59 (YICSFADCGAAYNKNWKLQAHLCKH), 65 to 89 (FPCKEEGCEKGFTSLHHLTRHSLTH), 95 to 120 (FTCDSDGCDLRFTTKANMKKHFNRFH), 127 to 151 (YVCHFENCGKAFKKHNQLKVHQFSH), 157 to 181 (YECPHEGCDKRFSLPSRLKRHEKVH), 184 to 210 (YPCKKDDSCSFVGKTWTLYLKHVAECH), 214 to 236 (AVCDVCNRKFRHKDYLRDHQKTH), 243 to 268 (YLCPRDGCDRSYTTAFNLRSHIQSFH), and 274 to 298 (FVCEHAGCGKCFAMKKSLERHSVVH). Ser-38 bears the Phosphoserine; by CK2 mark. Over residues 299–310 (DPEKRKLKEKCP) the composition is skewed to basic and acidic residues. A disordered region spans residues 299–366 (DPEKRKLKEK…SLVLDKLTIQ (68 aa)). The residue at position 336 (Ser-336) is a Phosphoserine; by CK2; in vitro.

In terms of processing, the N-terminus is blocked. Synthesized in oocytes and, in much lower levels, in somatic cells.

The protein resides in the nucleus. Involved in ribosomal large subunit biogenesis. Acts both as a positive transcription factor for 5S RNA genes, and as a specific RNA binding protein that complexes with 5S RNA in oocytes to form the 7S ribonucleoprotein storage particle. May play an essential role in the developmental change in 5S RNA gene expression. Interacts with the internal control region (ICR) of approximately 50 bases within the 5S RNA genes, is required for correct transcription of these genes by RNA polymerase III. Also binds the transcribed 5S RNA's. In Xenopus laevis (African clawed frog), this protein is Transcription factor IIIA (gtf3a).